The primary structure comprises 194 residues: Outer surface 22 kDa lipoprotein (194 aa).

The first 21 residues, 1–21 (MYKNGFFKNYLSLLLIFLVIA), serve as a signal peptide directing secretion. Cys-22 is lipidated: N-palmitoyl cysteine. A lipid anchor (S-diacylglycerol cysteine) is attached at Cys-22.

The protein resides in the cell outer membrane. The polypeptide is Outer surface 22 kDa lipoprotein (p22) (Borreliella burgdorferi (strain N40) (Borrelia burgdorferi)).